The following is a 234-amino-acid chain: MAERIPAVTVKTDGRKRRWHQHKVERRNELVDGTIEAIRRHGRFLSMDEIAAEIGVSKTVLYRYFVDKNDLTTAVMMRFTQTTLIPNMIAALSADMDGFELTREIIRVYVETVAAQPEPYRFVMANSSASKSKVIADSERIIARMLAVMLRRRMQEAGMDTGGVEPWAYLIVGGVQLATHSWMSDPRMSSDELIDYLTMLSWSALCGIVEAGGSLEKFREQPHPSPIVPAWGQV.

One can recognise an HTH tetR-type domain in the interval 24-83; that stretch reads VERRNELVDGTIEAIRRHGRFLSMDEIAAEIGVSKTVLYRYFVDKNDLTTAVMMRFTQTT. Residues 46 to 65 constitute a DNA-binding region (H-T-H motif); it reads SMDEIAAEIGVSKTVLYRYF.

This is an uncharacterized protein from Mycobacterium tuberculosis (strain CDC 1551 / Oshkosh).